Here is a 206-residue protein sequence, read N- to C-terminus: Transmembrane 4 L6 family member 19 (206 aa).

Residues 1–16 (MLSFSRVVNCSRTCSR) lie on the Cytoplasmic side of the membrane. A helical membrane pass occupies residues 17-37 (FLGLSLGTASLCAAGANIALL). The Extracellular portion of the chain corresponds to 38–54 (FPNWDVTYLMRGLIGKH). Residues 55–75 (AMLGSGLWGGGLMVLLAATLI) form a helical membrane-spanning segment. Residues 76–89 (SMTGSFSKSAPCLQ) lie on the Cytoplasmic side of the membrane. The chain crosses the membrane as a helical span at residues 90 to 110 (VLIALLSSGLALLGAVICFVT). The Extracellular segment spans residues 111–171 (SGVALKDGPF…PSKAVVWHVA (61 aa)). Asn129 is a glycosylation site (N-linked (GlcNAc...) asparagine). A helical membrane pass occupies residues 172–192 (FFSILLCISLLQLLLVAIHLV). Residues 182–192 (LQLLLVAIHLV) are important for homodimerization. Over 193–206 (NSILGLFCSFCEKH) the chain is Cytoplasmic.

It belongs to the L6 tetraspanin family. As to quaternary structure, may form homodimers and homooligomers. Interacts with integrins ITGAV and ITGB3. Interacts with components of members of the V0 complex of vacuolar(H+)-ATPase (V-ATPase), including ATP6V0B and ATP6V0D2; this interaction inhibits V1-V0 complex assembly. In terms of tissue distribution, predominantly expressed in osteoclasts (at protein level). Also expressed in white adipose tissue, as well as in bone marrow-derived macrophages.

The protein localises to the lysosome membrane. It is found in the cytoplasm. Its subcellular location is the cytoskeleton. It localises to the cell projection. The protein resides in the filopodium. Negatively regulates vacuolar (H+)-ATPase (V-ATPase) activity by interacting with members of V-ATPase V0 complex and hence inhibiting V1-V0 assembly. Required for multinucleation during osteoclast differentiation. This is Transmembrane 4 L6 family member 19 (Tm4sf19) from Mus musculus (Mouse).